A 386-amino-acid chain; its full sequence is Protein salvador homolog 1 (386 aa).

A phosphoserine mark is found at Ser-95 and Ser-137. 2 WW domains span residues 200–233 and 235–268; these read LPLPPGWSVDWTMRGRKYYIDHNTNTTHWSHPLE and EGLPPGWERVESSEFGTYYVDHTNKRAQYRHPCA. Thr-211 is subject to Phosphothreonine. In terms of domain architecture, SARAH spans 322–369; sequence ILKWELFQLADLDTYQGMLKLLFMKELEQIVKLYEAYRQALLTELENR. Residues 345–374 are a coiled coil; sequence MKELEQIVKLYEAYRQALLTELENRKQRQQ.

In terms of assembly, homodimer. Stabilized through interaction with STK3/MST2 or STK4/MST1. Interacts (via SARAH domain) with isoform 1 of NEK2. Interacts with ESR1 only in the presence of STK3/MST2. Interacts with WTIP and AJUBA. In terms of processing, phosphorylated by STK3/MST2 and STK4/MST1. Phosphorylation is not required for SAV1 stability and may increase the number of protein binding sites on the scaffold molecule. Ubiquitously expressed in adult tissues with the highest level found in testis.

It is found in the nucleus. The protein resides in the cytoplasm. Its function is as follows. Regulator of STK3/MST2 and STK4/MST1 in the Hippo signaling pathway which plays a pivotal role in organ size control and tumor suppression by restricting proliferation and promoting apoptosis. The core of this pathway is composed of a kinase cascade wherein STK3/MST2 and STK4/MST1, in complex with its regulatory protein SAV1, phosphorylates and activates LATS1/2 in complex with its regulatory protein MOB1, which in turn phosphorylates and inactivates YAP1 oncoprotein and WWTR1/TAZ. Phosphorylation of YAP1 by LATS1/2 inhibits its translocation into the nucleus to regulate cellular genes important for cell proliferation, cell death, and cell migration. SAV1 is required for STK3/MST2 and STK4/MST1 activation and promotes cell-cycle exit and terminal differentiation in developing epithelial tissues. Plays a role in centrosome disjunction by regulating the localization of NEK2 to centrosomes, and its ability to phosphorylate CROCC and CEP250. In conjunction with STK3/MST2, activates the transcriptional activity of ESR1 through the modulation of its phosphorylation. In Mus musculus (Mouse), this protein is Protein salvador homolog 1 (Sav1).